Here is a 433-residue protein sequence, read N- to C-terminus: Signal recognition particle 54 kDa protein (433 aa).

Residues 106 to 113, 186 to 190, and 244 to 247 contribute to the GTP site; these read GVEGSGKT, DTAGR, and TKMD.

The protein belongs to the GTP-binding SRP family. SRP54 subfamily. In terms of assembly, part of the signal recognition particle protein translocation system, which is composed of SRP and FtsY. Archaeal SRP consists of a 7S RNA molecule of 300 nucleotides and two protein subunits: SRP54 and SRP19.

The protein resides in the cytoplasm. It carries out the reaction GTP + H2O = GDP + phosphate + H(+). Involved in targeting and insertion of nascent membrane proteins into the cytoplasmic membrane. Binds to the hydrophobic signal sequence of the ribosome-nascent chain (RNC) as it emerges from the ribosomes. The SRP-RNC complex is then targeted to the cytoplasmic membrane where it interacts with the SRP receptor FtsY. This is Signal recognition particle 54 kDa protein from Pyrobaculum arsenaticum (strain DSM 13514 / JCM 11321 / PZ6).